Consider the following 712-residue polypeptide: DNA ligase (712 aa).

NAD(+) is bound by residues 53–57, 103–104, and Glu-133; these read DAEFD and SL. The active-site N6-AMP-lysine intermediate is the Lys-135. Positions 156, 196, 315, and 339 each coordinate NAD(+). Zn(2+) contacts are provided by Cys-433, Cys-436, Cys-452, and Cys-458. Residues 622–711 enclose the BRCT domain; sequence SIERTLEGLS…PERDAEDGEP (90 aa).

Belongs to the NAD-dependent DNA ligase family. LigA subfamily. Requires Mg(2+) as cofactor. Mn(2+) is required as a cofactor.

It carries out the reaction NAD(+) + (deoxyribonucleotide)n-3'-hydroxyl + 5'-phospho-(deoxyribonucleotide)m = (deoxyribonucleotide)n+m + AMP + beta-nicotinamide D-nucleotide.. In terms of biological role, DNA ligase that catalyzes the formation of phosphodiester linkages between 5'-phosphoryl and 3'-hydroxyl groups in double-stranded DNA using NAD as a coenzyme and as the energy source for the reaction. It is essential for DNA replication and repair of damaged DNA. This Mycolicibacterium gilvum (strain PYR-GCK) (Mycobacterium gilvum (strain PYR-GCK)) protein is DNA ligase.